Here is a 783-residue protein sequence, read N- to C-terminus: DNA repair and recombination protein RAD54-like (783 aa).

The required for chromatin remodeling, strand pairing activities and coupling of ATPase activity stretch occupies residues 2 to 9 (RRSLAPSQ). T22 carries the post-translational modification Phosphothreonine. Positions 165–340 (EGKRGNFNGC…FSLVNFVNPE (176 aa)) constitute a Helicase ATP-binding domain. 178–185 (DEMGLGKT) lines the ATP pocket. A DEGH box motif is present at residues 291–294 (DEGH). Residues 497–654 (LLDFMLAAIR…NNESSEKHFT (158 aa)) enclose the Helicase C-terminal domain. The interval 737–783 (AESKPAAITEDDESEQQQQSPKRTSKNDDNDEDFDPENSAEEQFLGF) is disordered. A compositionally biased stretch (acidic residues) spans 765 to 776 (DNDEDFDPENSA).

The protein belongs to the SNF2/RAD54 helicase family. As to quaternary structure, interacts (via N-terminus) with spn-A/Rad51.

It localises to the nucleus. Its function is as follows. Involved in mitotic DNA repair and meiotic recombination. Functions in the recombinational DNA repair pathway. Essential for interhomolog gene conversion (GC), but may have a less important role in intersister GC than spn-A/Rad51. In the presence of DNA, spn-A/Rad51 enhances the ATPase activity of okr/Rad54. In Drosophila mojavensis (Fruit fly), this protein is DNA repair and recombination protein RAD54-like.